A 153-amino-acid polypeptide reads, in one-letter code: MAL-like protein (153 aa).

The next 4 helical transmembrane spans lie at 22–42, 59–79, 97–117, and 131–151; these read LFLTIPFAFFLPELIFGFLVW, VMYVSLTSFLISLMFLLSYLF, GTTGILYMSAAVLQVHATIVS, and AASFFAFIATLLYILHAFSIY. Positions 22–153 constitute an MARVEL domain; that stretch reads LFLTIPFAFF…ILHAFSIYYH (132 aa).

It belongs to the MAL family.

It localises to the membrane. The chain is MAL-like protein (MALL) from Homo sapiens (Human).